The primary structure comprises 308 residues: Ornithine carbamoyltransferase (308 aa).

Carbamoyl phosphate contacts are provided by residues 55-58, Gln82, Arg106, and 133-136; these read STRT and HPCQ. L-ornithine contacts are provided by residues Asn164, Asp227, and 231-232; that span reads SM. Carbamoyl phosphate contacts are provided by residues 267–268 and Arg295; that span reads CL.

This sequence belongs to the aspartate/ornithine carbamoyltransferase superfamily. OTCase family.

The protein localises to the cytoplasm. The enzyme catalyses carbamoyl phosphate + L-ornithine = L-citrulline + phosphate + H(+). Its pathway is amino-acid biosynthesis; L-arginine biosynthesis; L-arginine from L-ornithine and carbamoyl phosphate: step 1/3. In terms of biological role, reversibly catalyzes the transfer of the carbamoyl group from carbamoyl phosphate (CP) to the N(epsilon) atom of ornithine (ORN) to produce L-citrulline. The chain is Ornithine carbamoyltransferase from Prochlorococcus marinus subsp. pastoris (strain CCMP1986 / NIES-2087 / MED4).